A 185-amino-acid polypeptide reads, in one-letter code: Ribosome-recycling factor (185 aa).

It belongs to the RRF family.

The protein localises to the cytoplasm. In terms of biological role, responsible for the release of ribosomes from messenger RNA at the termination of protein biosynthesis. May increase the efficiency of translation by recycling ribosomes from one round of translation to another. The chain is Ribosome-recycling factor from Xanthomonas euvesicatoria pv. vesicatoria (strain 85-10) (Xanthomonas campestris pv. vesicatoria).